The chain runs to 213 residues: tRNA (guanine-N(7)-)-methyltransferase (213 aa).

The S-adenosyl-L-methionine site is built by Asp44, Glu69, Asn96, and Asp119. Asp119 is an active-site residue. Residues Lys123 and Asp155 each contribute to the substrate site.

This sequence belongs to the class I-like SAM-binding methyltransferase superfamily. TrmB family.

It catalyses the reaction guanosine(46) in tRNA + S-adenosyl-L-methionine = N(7)-methylguanosine(46) in tRNA + S-adenosyl-L-homocysteine. Its pathway is tRNA modification; N(7)-methylguanine-tRNA biosynthesis. Functionally, catalyzes the formation of N(7)-methylguanine at position 46 (m7G46) in tRNA. In Thermosynechococcus vestitus (strain NIES-2133 / IAM M-273 / BP-1), this protein is tRNA (guanine-N(7)-)-methyltransferase.